The chain runs to 207 residues: Outer-membrane lipoprotein carrier protein (207 aa).

Residues 1 to 23 form the signal peptide; sequence MMKPHNLFQFLAVCSLTVAVASA.

Belongs to the LolA family. In terms of assembly, monomer.

Its subcellular location is the periplasm. Participates in the translocation of lipoproteins from the inner membrane to the outer membrane. Only forms a complex with a lipoprotein if the residue after the N-terminal Cys is not an aspartate (The Asp acts as a targeting signal to indicate that the lipoprotein should stay in the inner membrane). The polypeptide is Outer-membrane lipoprotein carrier protein (Neisseria gonorrhoeae (strain ATCC 700825 / FA 1090)).